The sequence spans 296 residues: Enoyl-CoA hydratase AKT3-2 (296 aa).

The Peroxisomal targeting signal type 1 signature appears at 294–296 (PKL).

Belongs to the enoyl-CoA hydratase/isomerase family.

Its subcellular location is the peroxisome. The catalysed reaction is a (3S)-3-hydroxyacyl-CoA = a (2E)-enoyl-CoA + H2O. It carries out the reaction a 4-saturated-(3S)-3-hydroxyacyl-CoA = a (3E)-enoyl-CoA + H2O. It participates in mycotoxin biosynthesis. Enoyl-CoA hydratase; part of the gene clusters that mediate the biosynthesis of the host-selective toxins (HSTs) AK-toxins responsible for Japanese pear black spot disease by the Japanese pear pathotype. AK-toxins are esters of 9,10-epoxy 8-hydroxy 9-methyldecatrienoic acid (EDA). On cellular level, AK-toxins affect plasma membrane of susceptible cells and cause a sudden increase in loss of K(+) after a few minutes of toxin treatment. The acyl-CoA ligase AKT1, the hydrolase AKT2 and enoyl-CoA hydratase AKT3 are all involved in the biosynthesis of the AK-, AF- and ACT-toxin common 9,10-epoxy-8-hydroxy-9-methyl-decatrienoic acid (EDA) structural moiety. Part of the EDA biosynthesis occurs in the peroxisome since these 3 enzymes are localized in peroxisomes. The exact roles of the 3 enzymes, as well as of additional AK-toxin clusters enzymes, including AKT4, AKT6 and AKTS1, have still to be elucidated. The Cytochrome P450 monooxygenase AKT7 on the other side functions to limit production of EDA and AK-toxin, probably via the catalysis of a side reaction of EDA or its precursor. This is Enoyl-CoA hydratase AKT3-2 from Alternaria alternata (Alternaria rot fungus).